Consider the following 101-residue polypeptide: Small ribosomal subunit protein uS14A (101 aa).

A disordered region spans residues 28-57; sequence KDIIRSPSSAPEQRSTAQRALARQPRDASP. A compositionally biased stretch (polar residues) spans 33–45; it reads SPSSAPEQRSTAQ.

This sequence belongs to the universal ribosomal protein uS14 family. Part of the 30S ribosomal subunit. Contacts proteins S3 and S10.

Functionally, binds 16S rRNA, required for the assembly of 30S particles and may also be responsible for determining the conformation of the 16S rRNA at the A site. The polypeptide is Small ribosomal subunit protein uS14A (Mycobacterium bovis (strain ATCC BAA-935 / AF2122/97)).